The primary structure comprises 633 residues: MVNKYTYTSSKAMSDISDVIGEPLAAWDSQVGGRVFNVIFDGKVYTNTYWVERWQVPGIGSSDGNPHNAWKFVRAATADEINKIGNPTTADVKPTENIPSPILVEDKYTEETYSRPDVNFKEDGSQGNLSYTATRVCAPMYNHYVGDKTKPKLSAYITDWCQYDARLDGGGSKEEERGRGFDLATLMQNPATYDRLIFSFLGICGDIGNKSKKVQEVWDGWNAQAPSLGLPQIGKGHIVPLDPYGDLGTARNVGLPPESADTSIESGTFLPYYQQNRAAGLLGGLRELQKKAHAMGHKLDLAFSIGGWSLSSYFSALAENPDERRVFVASVVDFFVRFPMFSCVDIDWEYPGGGGDEGNISSDKDGENYVLLIKELRSALDSRFGYSNRKEISIACSGVKAKLKKSNIDQLVANGLDNIYLMSYDFFGTIWADYIGHHTNLYSPKDPGEQELFDLSAEAAIDYLHNELGIPMEKIHLGYANYGRSAVGGDLTTRQYTKNGPALGTMENGAPEFFDIVKNYMDAEHSLSMGKNGFVLMTDTNADADFLFSEAKGHFISLDTPRTVKQKGEYAAKNKLGGVFSWSGDQDCGLLANAAREGLGYVADSNQETIDMGPLYNPGKEIYLKSISEIKSK.

The region spanning 151 to 602 is the GH18 domain; it reads PKLSAYITDW…NAAREGLGYV (452 aa). Chitin contacts are provided by residues 275 to 276 and 306 to 309; these read QN and GGWS. Residue Glu-349 is the Proton donor of the active site. Chitin contacts are provided by residues Tyr-350, 422 to 425, and Trp-582; that span reads MSYD.

It belongs to the glycosyl hydrolase 18 family. As to quaternary structure, semipurified toxin complex consists of at least YenA1-YenA2-YenB-YenC1-YenC2-Chi1-Chi2. The Yen-TC:K9 subcomplex is about 26 nm tall and 22 nm in diameter with 5-fold symmetry and 5 copies of YenA1, YenA2, Chi1 and Chi2; the chitinase subunits may be solvent accessible on the exterior the complex. The Yen-TC:K9 subcomplex has no insecticidal activity. The native complex with additional YenB, YenC1 and YenC2 subunits is 16 nm taller and is insecticidal; the toxicity-conferring subunits are present at about 1 copy each.

Its subcellular location is the secreted. It carries out the reaction Random endo-hydrolysis of N-acetyl-beta-D-glucosaminide (1-&gt;4)-beta-linkages in chitin and chitodextrins.. Toxin complex is secreted when grown at 25 degrees Celsius or less; at higher temperatures the proteins are present intracellularly but not secreted. Part of an orally active toxin complex (TC) with strong insecticidal effects on larvae of the Coleoptera Costelytra zealandica, Acrossidius tasmania and Adoryphorus couloni and some Lepidoptera larvae. The TC has an endochitinase activity. This subunit might aid infection by degradation of the larval peritrophic membrane. This Yersinia entomophaga protein is Chitinase 2.